The following is a 527-amino-acid chain: Tetanolysin (527 aa).

An N-terminal signal peptide occupies residues 1–32; the sequence is MNKNVLKFVSRSLLIFSMTGLISNYNSSNVLA. 4 beta stranded membrane-spanning segments follow: residues 215–228, 235–244, 313–322, and 330–342; these read QSQL…NFKA, IDFDSIFKGE, SSHVKAAFKA, and SSNA…LNQS. Positions 484–494 match the Conserved undecapeptide motif; the sequence is ECTGLAWEWWR. The Cholesterol binding signature appears at 516-517; that stretch reads TL.

The protein belongs to the cholesterol-dependent cytolysin family. In terms of assembly, homooligomeric pore complex containing 35-50 subunits; when inserted in the host membrane. In terms of processing, purified 48 and 53 kDa proteins with 4 different pIs (6.1, 5.6, 5.3 and 6.6) in decreasing order of activity.

It is found in the secreted. Its subcellular location is the host cell membrane. With respect to regulation, cytolysis of host cells is inhibited by cholesterol. In terms of biological role, a cholesterol-dependent toxin that causes cytolysis by forming pores in cholesterol-containing host membranes. After binding to target membranes, the protein undergoes a major conformation change, leading to its insertion in the host membrane and formation of an oligomeric pore complex. Cholesterol is required for binding to host membranes, membrane insertion and pore formation; cholesterol binding is mediated by a Thr-Leu pair in the C-terminus. In Clostridium tetani (strain Massachusetts / E88), this protein is Tetanolysin.